Here is a 152-residue protein sequence, read N- to C-terminus: Transcriptional repressor NrdR (152 aa).

The segment at 3-34 (CPFCNAADSKVIDSRLAAEGCQIRRRRECVSC) is a zinc-finger region. The region spanning 49–139 (PRVIKSNGKN…VYQDFQDVEA (91 aa)) is the ATP-cone domain.

The protein belongs to the NrdR family. The cofactor is Zn(2+).

In terms of biological role, negatively regulates transcription of bacterial ribonucleotide reductase nrd genes and operons by binding to NrdR-boxes. The polypeptide is Transcriptional repressor NrdR (Acinetobacter baumannii (strain AB0057)).